The chain runs to 113 residues: Protein SPIRAL1-like 1 (113 aa).

Gly residues predominate over residues 1–12 (MGRGVSVGGGQS). A disordered region spans residues 1–50 (MGRGVSVGGGQSSLGYLFGSGEAPKPAINNAPAPSSETLPISADPSPKHV). Residues 23-34 (APKPAINNAPAP) are compositionally biased toward low complexity. Ser69 bears the Phosphoserine mark. Residues 79 to 113 (QNTGNFLTDRPSTKVHAAPGGGSSLDYLFGGGGSN) are disordered. A compositionally biased stretch (gly residues) spans 97–113 (PGGGSSLDYLFGGGGSN).

Belongs to the SPIRAL1 family. In terms of tissue distribution, detected in pollen of mature flowers.

Acts redundantly with SPR1 in maintaining the cortical microtubules organization essential for anisotropic cell growth. This Arabidopsis thaliana (Mouse-ear cress) protein is Protein SPIRAL1-like 1 (SP1L1).